The primary structure comprises 429 residues: Adenylosuccinate synthetase (429 aa).

GTP-binding positions include 12–18 (GDEGKGK) and 40–42 (GHT). Residue D13 is the Proton acceptor of the active site. Mg(2+) is bound by residues D13 and G40. Residues 13–16 (DEGK), 38–41 (NAGH), T128, R142, Q223, T238, and R302 each bind IMP. H41 acts as the Proton donor in catalysis. Residue 298 to 304 (TVTGRPR) coordinates substrate. Residues R304, 330 to 332 (LLD), and 412 to 414 (SVG) each bind GTP.

This sequence belongs to the adenylosuccinate synthetase family. In terms of assembly, homodimer. It depends on Mg(2+) as a cofactor.

The protein localises to the cytoplasm. It carries out the reaction IMP + L-aspartate + GTP = N(6)-(1,2-dicarboxyethyl)-AMP + GDP + phosphate + 2 H(+). The protein operates within purine metabolism; AMP biosynthesis via de novo pathway; AMP from IMP: step 1/2. In terms of biological role, plays an important role in the de novo pathway of purine nucleotide biosynthesis. Catalyzes the first committed step in the biosynthesis of AMP from IMP. This is Adenylosuccinate synthetase from Lactobacillus johnsonii (strain CNCM I-12250 / La1 / NCC 533).